A 243-amino-acid polypeptide reads, in one-letter code: 2,3-bisphosphoglycerate-dependent phosphoglycerate mutase (243 aa).

Residues 8 to 15 (RHGQSEWN), 21 to 22 (TG), arginine 60, 87 to 90 (ERHY), lysine 98, 114 to 115 (RR), and 183 to 184 (GN) each bind substrate. Histidine 9 acts as the Tele-phosphohistidine intermediate in catalysis. The Proton donor/acceptor role is filled by glutamate 87.

This sequence belongs to the phosphoglycerate mutase family. BPG-dependent PGAM subfamily.

It carries out the reaction (2R)-2-phosphoglycerate = (2R)-3-phosphoglycerate. It participates in carbohydrate degradation; glycolysis; pyruvate from D-glyceraldehyde 3-phosphate: step 3/5. In terms of biological role, catalyzes the interconversion of 2-phosphoglycerate and 3-phosphoglycerate. This chain is 2,3-bisphosphoglycerate-dependent phosphoglycerate mutase, found in Clostridium acetobutylicum (strain ATCC 824 / DSM 792 / JCM 1419 / IAM 19013 / LMG 5710 / NBRC 13948 / NRRL B-527 / VKM B-1787 / 2291 / W).